A 285-amino-acid chain; its full sequence is Inhibitor of growth protein 5 (285 aa).

Residues 116 to 225 are disordered; it reads EKASSTRAKS…ATHPSDVMDM (110 aa). Basic residues predominate over residues 131–149; that stretch reads KKGRKKTKDSKTTGKKKKS. Residues 160–178 show a composition bias toward low complexity; that stretch reads NNQSNANSSVNSSSNAGQG. The PHD-type zinc finger occupies 232-281; the sequence is PTYCLCHQVSYGEMIGCDNPDCPIEWFHFACVGLTTKPKGKWFCPKCTQD. Positions 235, 237, 248, 253, 259, 262, 275, and 278 each coordinate Zn(2+).

The protein belongs to the ING family. As to quaternary structure, component of the Enok complex composed of at least Br140, enok, Eaf6 and Ing5.

It is found in the nucleus. Its subcellular location is the chromosome. Functionally, component of the Enok complex which has a histone H3 acetyltransferase activity. This is Inhibitor of growth protein 5 from Drosophila melanogaster (Fruit fly).